A 241-amino-acid chain; its full sequence is DNA repair protein RecO (241 aa).

The protein belongs to the RecO family.

Functionally, involved in DNA repair and RecF pathway recombination. The chain is DNA repair protein RecO from Vibrio cholerae serotype O1 (strain ATCC 39541 / Classical Ogawa 395 / O395).